The chain runs to 354 residues: Protein RecA (354 aa).

75–82 provides a ligand contact to ATP; it reads GPESSGKT.

This sequence belongs to the RecA family.

The protein resides in the cytoplasm. Its function is as follows. Can catalyze the hydrolysis of ATP in the presence of single-stranded DNA, the ATP-dependent uptake of single-stranded DNA by duplex DNA, and the ATP-dependent hybridization of homologous single-stranded DNAs. It interacts with LexA causing its activation and leading to its autocatalytic cleavage. In Cupriavidus taiwanensis (strain DSM 17343 / BCRC 17206 / CCUG 44338 / CIP 107171 / LMG 19424 / R1) (Ralstonia taiwanensis (strain LMG 19424)), this protein is Protein RecA.